Consider the following 269-residue polypeptide: Indole-3-glycerol phosphate synthase (269 aa).

The protein belongs to the TrpC family.

The enzyme catalyses 1-(2-carboxyphenylamino)-1-deoxy-D-ribulose 5-phosphate + H(+) = (1S,2R)-1-C-(indol-3-yl)glycerol 3-phosphate + CO2 + H2O. Its pathway is amino-acid biosynthesis; L-tryptophan biosynthesis; L-tryptophan from chorismate: step 4/5. The protein is Indole-3-glycerol phosphate synthase of Roseiflexus castenholzii (strain DSM 13941 / HLO8).